The primary structure comprises 35 residues: Conotoxin Cl6.16 (35 aa).

3 disulfide bridges follow: Cys-10/Cys-22, Cys-16/Cys-27, and Cys-21/Cys-34.

As to expression, expressed by the venom duct.

The protein localises to the secreted. The sequence is that of Conotoxin Cl6.16 from Californiconus californicus (California cone).